The primary structure comprises 461 residues: Anthranilate synthase component 1 (461 aa).

L-tryptophan contacts are provided by residues S43 and 238–240; that span reads PYM. Residue 273 to 274 participates in chorismate binding; sequence GT. E300 contributes to the Mg(2+) binding site. Chorismate contacts are provided by residues Y388, R408, 422–424, and G424; that span reads GAG. A Mg(2+)-binding site is contributed by E437.

Belongs to the anthranilate synthase component I family. Heterotetramer consisting of two non-identical subunits: a beta subunit (TrpG) and a large alpha subunit (TrpE). The cofactor is Mg(2+).

It carries out the reaction chorismate + L-glutamine = anthranilate + pyruvate + L-glutamate + H(+). It functions in the pathway amino-acid biosynthesis; L-tryptophan biosynthesis; L-tryptophan from chorismate: step 1/5. Its activity is regulated as follows. Feedback inhibited by tryptophan. Its function is as follows. Part of a heterotetrameric complex that catalyzes the two-step biosynthesis of anthranilate, an intermediate in the biosynthesis of L-tryptophan. In the first step, the glutamine-binding beta subunit (TrpG) of anthranilate synthase (AS) provides the glutamine amidotransferase activity which generates ammonia as a substrate that, along with chorismate, is used in the second step, catalyzed by the large alpha subunit of AS (TrpE) to produce anthranilate. In the absence of TrpG, TrpE can synthesize anthranilate directly from chorismate and high concentrations of ammonia. This is Anthranilate synthase component 1 (trpE) from Methanothermobacter marburgensis (strain ATCC BAA-927 / DSM 2133 / JCM 14651 / NBRC 100331 / OCM 82 / Marburg) (Methanobacterium thermoautotrophicum).